The chain runs to 152 residues: Arginine repressor (152 aa).

This sequence belongs to the ArgR family.

The protein localises to the cytoplasm. Its pathway is amino-acid biosynthesis; L-arginine biosynthesis [regulation]. Regulates arginine biosynthesis genes. This is Arginine repressor from Lactococcus lactis subsp. cremoris (strain MG1363).